The following is a 179-amino-acid chain: uncharacterized protein (179 aa).

Residues 26 to 39 show a composition bias toward low complexity; the sequence is AAKLAAATTPTHTA. A disordered region spans residues 26–179; that stretch reads AAKLAAATTP…RPRRNTLRHM (154 aa). The span at 150–165 shows a compositional bias: polar residues; that stretch reads RQSVTQSTAARQTQPH. Positions 167–179 are enriched in basic residues; that stretch reads GRPRPRRNTLRHM.

This is an uncharacterized protein from Equus caballus (Horse).